Reading from the N-terminus, the 713-residue chain is Probable arginine--tRNA ligase, cytoplasmic (713 aa).

The segment at 74–113 (KNKKNGVKATSTSSPSSSTSAPAEKKAKKDGKTGGAPPKQ) is disordered. The span at 81 to 95 (KATSTSSPSSSTSAP) shows a compositional bias: low complexity. Residues 96 to 105 (AEKKAKKDGK) are compositionally biased toward basic and acidic residues. L-arginine-binding positions include 252-254 (SPN), histidine 263, tyrosine 438, aspartate 442, and glutamine 466. A 'HIGH' region motif is present at residues 252-263 (SPNIAKEMHVGH). Residues 583 to 597 (NTAVYLLYAYTRIQS) form an interaction with tRNA region.

This sequence belongs to the class-I aminoacyl-tRNA synthetase family.

It localises to the cytoplasm. It is found in the cytosol. The enzyme catalyses tRNA(Arg) + L-arginine + ATP = L-arginyl-tRNA(Arg) + AMP + diphosphate. Forms part of a macromolecular complex that catalyzes the attachment of specific amino acids to cognate tRNAs during protein synthesis. The chain is Probable arginine--tRNA ligase, cytoplasmic from Caenorhabditis elegans.